The sequence spans 326 residues: Cinnamoyl-CoA reductase CAD2 (326 aa).

NADP(+) contacts are provided by residues 14–20 (GASGYIA), Arg-39, Lys-46, 66–67 (NL), and 86–88 (TAS). Ser-130, Tyr-136, Arg-141, and Tyr-165 together coordinate (E)-coniferaldehyde. NADP(+)-binding positions include Tyr-165, Lys-169, 192 to 195 (PAMV), and Ser-207. Lys-169 functions as the Proton donor in the catalytic mechanism. 5 residues coordinate (E)-coniferaldehyde: Met-194, Ser-207, Phe-226, Val-257, and Tyr-290.

Belongs to the NAD(P)-dependent epimerase/dehydratase family. Dihydroflavonol-4-reductase subfamily.

It is found in the cytoplasm. The enzyme catalyses (E)-cinnamaldehyde + NADP(+) + CoA = (E)-cinnamoyl-CoA + NADPH + H(+). It catalyses the reaction (E)-coniferaldehyde + NADP(+) + CoA = (E)-feruloyl-CoA + NADPH + H(+). The catalysed reaction is (E)-4-coumaraldehyde + NADP(+) + CoA = (E)-4-coumaroyl-CoA + NADPH + H(+). It participates in aromatic compound metabolism; phenylpropanoid biosynthesis. Its function is as follows. Involved in lignin biosynthesis. Regulates the monolignol composition by catalyzing the conversion of cinnamoyl-CoAs into their corresponding cinnamaldehydes. Can use coumaraldehyde and coniferaldehyde as substrates, but barely sinapaldehyde. This is Cinnamoyl-CoA reductase CAD2 from Medicago truncatula (Barrel medic).